The following is a 179-amino-acid chain: Stathmin-2 (179 aa).

The membrane attachment stretch occupies residues 1 to 26 (MAKTAMAYKEKMKELSMLSLICSCFY). S16 is subject to Phosphoserine. Residues C22 and C24 are each lipidated (S-palmitoyl cysteine). The SLD domain maps to 38-179 (DDMEVKQINK…NKELQVELSG (142 aa)). The segment at 39–96 (DMEVKQINKRASGQAFELILKPPSPISEAPRTLASPKKKDLSLEEIQKKLEAAEGRRK) is regulatory/phosphorylation domain. Position 50 is a phosphoserine (S50). Residues S62 and S73 each carry the phosphoserine; by MAPK8 modification. A coiled-coil region spans residues 75 to 179 (KKKDLSLEEI…NKELQVELSG (105 aa)). Phosphoserine is present on residues S80 and S97.

It belongs to the stathmin family. Interacts with ITM2C. Interacts with MAPK8. Interacts with KIFBP. Interacts (via the N-terminal region) with CIB1 (via C-terminal region); the interaction is direct, occurs in a calcium-dependent manner and attenuates the neurite outgrowth inhibition of STMN2. Post-translationally, sumoylated. Phosphorylated by MAPK9 and MAPK10 in the developing brain cortex. Phosphorylated mostly by MAPK8. In terms of processing, N-terminal palmitoylation promotes specific anchoring to the cytosolic leaflet of Golgi membranes and subsequent vesicular trafficking along dendrites and axons. Neuronal Stathmins are substrates for palmitoyltransferases ZDHHC3, ZDHHC7 and ZDHHC15. Expressed in neurons (at protein level). Present in growth cones and abundant in developing neurons.

Its subcellular location is the cytoplasm. The protein localises to the perinuclear region. It is found in the cell projection. It localises to the growth cone. The protein resides in the axon. Its subcellular location is the membrane. The protein localises to the golgi apparatus. It is found in the endosome. It localises to the lamellipodium. Functionally, regulator of microtubule stability. When phosphorylated by MAPK8, stabilizes microtubules and consequently controls neurite length in cortical neurons. In the developing brain, negatively regulates the rate of exit from multipolar stage and retards radial migration from the ventricular zone. This Rattus norvegicus (Rat) protein is Stathmin-2 (Stmn2).